The chain runs to 353 residues: Mitogen-activated protein kinase mpkB (353 aa).

One can recognise a Protein kinase domain in the interval 21 to 309 (YEIQDVIGEG…VEEALRHPYL (289 aa)). ATP-binding positions include 27 to 35 (IGEGAYGVV) and Lys-50. Catalysis depends on Asp-145, which acts as the Proton acceptor.

This sequence belongs to the protein kinase superfamily. Ser/Thr protein kinase family. MAP kinase subfamily. The cofactor is Mg(2+).

Its subcellular location is the nucleus. It carries out the reaction L-seryl-[protein] + ATP = O-phospho-L-seryl-[protein] + ADP + H(+). It catalyses the reaction L-threonyl-[protein] + ATP = O-phospho-L-threonyl-[protein] + ADP + H(+). Activated by threonine and tyrosine phosphorylation. Mitogen-activated protein kinase (MAPK) that plays a role in conidiation and regulation of secondary metabolite biosynthesis. Acts as a repressor of dihydroxynaphthalene (DHN)-melanin production. The protein is Mitogen-activated protein kinase mpkB of Aspergillus fumigatus (strain CBS 144.89 / FGSC A1163 / CEA10) (Neosartorya fumigata).